Here is a 308-residue protein sequence, read N- to C-terminus: GTP cyclohydrolase MptA (308 aa).

The tract at residues 282 to 308 (NDESIHQHNAHAEREVTLGQLRDELDA) is disordered.

This sequence belongs to the GTP cyclohydrolase IV family. In terms of assembly, homodimer. The cofactor is Fe(2+).

The enzyme catalyses GTP + H2O = 7,8-dihydroneopterin 2',3'-cyclic phosphate + formate + diphosphate + H(+). It participates in cofactor biosynthesis; 5,6,7,8-tetrahydromethanopterin biosynthesis. In terms of biological role, converts GTP to 7,8-dihydro-D-neopterin 2',3'-cyclic phosphate, the first intermediate in the biosynthesis of coenzyme methanopterin. Involved in archaeosine (G(+)) and folate biosynthesis. The sequence is that of GTP cyclohydrolase MptA from Haloferax volcanii (strain ATCC 29605 / DSM 3757 / JCM 8879 / NBRC 14742 / NCIMB 2012 / VKM B-1768 / DS2) (Halobacterium volcanii).